The following is a 361-amino-acid chain: Peptide chain release factor 1 (361 aa).

Gln237 bears the N5-methylglutamine mark. Basic and acidic residues predominate over residues 286–296; sequence EKRRSAEESTR. The segment at 286-305 is disordered; sequence EKRRSAEESTRRNLVSSGDR.

The protein belongs to the prokaryotic/mitochondrial release factor family. Methylated by PrmC. Methylation increases the termination efficiency of RF1.

The protein resides in the cytoplasm. Peptide chain release factor 1 directs the termination of translation in response to the peptide chain termination codons UAG and UAA. This is Peptide chain release factor 1 from Shewanella pealeana (strain ATCC 700345 / ANG-SQ1).